We begin with the raw amino-acid sequence, 341 residues long: Anthranilate phosphoribosyltransferase (341 aa).

Residues Gly79, 82-83 (GD), Thr87, 89-92 (NIST), 107-115 (KHGNRAVSS), and Ser119 each bind 5-phospho-alpha-D-ribose 1-diphosphate. An anthranilate-binding site is contributed by Gly79. Ser91 contacts Mg(2+). Residue Asn110 coordinates anthranilate. Arg165 is a binding site for anthranilate. Positions 224 and 225 each coordinate Mg(2+).

It belongs to the anthranilate phosphoribosyltransferase family. In terms of assembly, homodimer. It depends on Mg(2+) as a cofactor.

The catalysed reaction is N-(5-phospho-beta-D-ribosyl)anthranilate + diphosphate = 5-phospho-alpha-D-ribose 1-diphosphate + anthranilate. The protein operates within amino-acid biosynthesis; L-tryptophan biosynthesis; L-tryptophan from chorismate: step 2/5. Catalyzes the transfer of the phosphoribosyl group of 5-phosphorylribose-1-pyrophosphate (PRPP) to anthranilate to yield N-(5'-phosphoribosyl)-anthranilate (PRA). This Bacillus mycoides (strain KBAB4) (Bacillus weihenstephanensis) protein is Anthranilate phosphoribosyltransferase.